The following is a 495-amino-acid chain: MLDSNELIQQRIQKIEDLKNQGINPYPVRFFPDSKSKDIVEKFEKDPTGPETKFKLGGRLHSKRVMGKASFAHLKDSTGIIQLYATRDDLGEISYSIFKSLDLGDIIGLEGYLFKTQKGEVTLHVTSVELLAKCIRPLPVVKEKDGVIYDAFADVEQRYRMRYVDLVVNDHVRDTFITRSRIVSEIRNFLTNEGFLEVETPMMQPIAGGAAARPFVTHHNTLDMQLFLRIAPELYLKRLIVGGMDRVFELNRNFRNEGISTKHNPEFTMMEAYIAFADMNTMLDLTERLITHLAQKIHGALKIQYGKDLIDLSPPWRKITYTDIIKEYSGIDFSLITSLEEAKKKASELNVDVSKCNTIWKVADEVFSEKAEPNLIQPVFIIDYPKELSPLAKSNPDKPGYVERFEPYVAGREIGNAFTELNDPFDQKERFEDQVQQREAGDDEAFMMDEDYIRALEYGMPPTGGLGIGIDRLVMLLTDSHSIRDTILFPLMRPE.

Mg(2+)-binding residues include glutamate 406 and glutamate 413.

Belongs to the class-II aminoacyl-tRNA synthetase family. In terms of assembly, homodimer. The cofactor is Mg(2+).

The protein localises to the cytoplasm. The enzyme catalyses tRNA(Lys) + L-lysine + ATP = L-lysyl-tRNA(Lys) + AMP + diphosphate. The protein is Lysine--tRNA ligase of Leptospira borgpetersenii serovar Hardjo-bovis (strain JB197).